Reading from the N-terminus, the 244-residue chain is HTH-type transcriptional repressor PhnF (244 aa).

In terms of domain architecture, HTH gntR-type spans 8–74 (RILKHQVVRA…RGRTTVVARP (67 aa)). The H-T-H motif DNA-binding region spans 35-54 (EREIAEQFEVARETVRQALR).

The protein resides in the cytoplasm. In terms of biological role, represses the phnDCE operon, involved in the uptake of phosphate, under conditions of phosphate availability in the cell. In Mycolicibacterium smegmatis (strain ATCC 700084 / mc(2)155) (Mycobacterium smegmatis), this protein is HTH-type transcriptional repressor PhnF (phnF).